The sequence spans 431 residues: Glutamate-1-semialdehyde 2,1-aminomutase (431 aa).

The residue at position 265 (Lys-265) is an N6-(pyridoxal phosphate)lysine.

This sequence belongs to the class-III pyridoxal-phosphate-dependent aminotransferase family. HemL subfamily. In terms of assembly, homodimer. Pyridoxal 5'-phosphate is required as a cofactor.

It localises to the cytoplasm. The enzyme catalyses (S)-4-amino-5-oxopentanoate = 5-aminolevulinate. The protein operates within porphyrin-containing compound metabolism; protoporphyrin-IX biosynthesis; 5-aminolevulinate from L-glutamyl-tRNA(Glu): step 2/2. This chain is Glutamate-1-semialdehyde 2,1-aminomutase, found in Vibrio parahaemolyticus serotype O3:K6 (strain RIMD 2210633).